The following is a 390-amino-acid chain: S-adenosylmethionine synthase 1 (390 aa).

Glu9 contributes to the Mg(2+) binding site. Residue His15 participates in ATP binding. Residue Glu43 coordinates K(+). The L-methionine site is built by Glu56 and Gln99. Residues 167–169 (DGK), 235–238 (SGRF), Asp246, 252–253 (RK), Ala269, Lys273, and Lys277 each bind ATP. Asp246 contributes to the L-methionine binding site. An L-methionine-binding site is contributed by Lys277.

This sequence belongs to the AdoMet synthase family. As to quaternary structure, homotetramer. Requires Mn(2+) as cofactor. Mg(2+) serves as cofactor. Co(2+) is required as a cofactor. The cofactor is K(+).

The protein localises to the cytoplasm. The catalysed reaction is L-methionine + ATP + H2O = S-adenosyl-L-methionine + phosphate + diphosphate. The protein operates within amino-acid biosynthesis; S-adenosyl-L-methionine biosynthesis; S-adenosyl-L-methionine from L-methionine: step 1/1. Its function is as follows. Catalyzes the formation of S-adenosylmethionine from methionine and ATP. The reaction comprises two steps that are both catalyzed by the same enzyme: formation of S-adenosylmethionine (AdoMet) and triphosphate, and subsequent hydrolysis of the triphosphate. The chain is S-adenosylmethionine synthase 1 (SAM1) from Actinidia chinensis var. chinensis (Chinese soft-hair kiwi).